A 243-amino-acid chain; its full sequence is MSGDATRTLGKGSQPPGPVPEGLIRIYSMRFCPYSHRTRLVLKAKDIRHEVVNINLRNKPEWYYTKHPFGHIPVLETSQCQLIYESVIACEYLDDAYPGRKLFPYDPYERARQKMLLELFCKVPHLTKECLVALRCGRECTNLKAALRQEFSNLEEILEYQNTTFFGGTCISMIDYLLWPWFERLDVYGILDCVSHTPALRLWISAMKWDPTVCALLMDKSIFQGFLNLYFQNNPNAFDFGLC.

Residues 22 to 101 enclose the GST N-terminal domain; that stretch reads GLIRIYSMRF…YLDDAYPGRK (80 aa). Residue C32 is the Nucleophile of the active site. Glutathione contacts are provided by residues K59, I72, and 85–86; that span reads ES. Residues 106-231 enclose the GST C-terminal domain; that stretch reads DPYERARQKM…IFQGFLNLYF (126 aa).

This sequence belongs to the GST superfamily. Omega family. Expressed in a range of tissues, including the liver, kidney, skeletal muscle and prostate. Strongest expression in the testis.

The catalysed reaction is RX + glutathione = an S-substituted glutathione + a halide anion + H(+). It catalyses the reaction L-dehydroascorbate + 2 glutathione = glutathione disulfide + L-ascorbate. The enzyme catalyses methylarsonate + 2 glutathione + H(+) = methylarsonous acid + glutathione disulfide + H2O. Exhibits glutathione-dependent thiol transferase activity. Has high dehydroascorbate reductase activity and may contribute to the recycling of ascorbic acid. Participates in the biotransformation of inorganic arsenic and reduces monomethylarsonic acid (MMA). This Homo sapiens (Human) protein is Glutathione S-transferase omega-2 (GSTO2).